The chain runs to 419 residues: Glucose-1-phosphate adenylyltransferase (419 aa).

Alpha-D-glucose 1-phosphate-binding positions include Y107, G172, 187–188, and S205; that span reads EK.

It belongs to the bacterial/plant glucose-1-phosphate adenylyltransferase family. As to quaternary structure, homotetramer.

The catalysed reaction is alpha-D-glucose 1-phosphate + ATP + H(+) = ADP-alpha-D-glucose + diphosphate. It participates in glycan biosynthesis; glycogen biosynthesis. Its function is as follows. Involved in the biosynthesis of ADP-glucose, a building block required for the elongation reactions to produce glycogen. Catalyzes the reaction between ATP and alpha-D-glucose 1-phosphate (G1P) to produce pyrophosphate and ADP-Glc. The polypeptide is Glucose-1-phosphate adenylyltransferase (Novosphingobium aromaticivorans (strain ATCC 700278 / DSM 12444 / CCUG 56034 / CIP 105152 / NBRC 16084 / F199)).